The following is a 2692-amino-acid chain: Thyroglobulin (2692 aa).

Residues 1–19 (MALALWVFALLGSACLVSA) form the signal peptide. At Tyr-24 the chain carries Iodotyrosine; alternate. Position 24 is a sulfotyrosine; alternate (Tyr-24). Residue Tyr-24 is modified to Thyroxine; alternate. Position 24 is a triiodothyronine; alternate (Tyr-24). 3 consecutive Thyroglobulin type-1 domains span residues 31-92 (LRPC…PVAC), 93-160 (LSFC…PARC), and 161-248 (PGSC…LAGT). Disulfide bonds link Cys-34–Cys-52, Cys-63–Cys-70, Cys-72–Cys-92, Cys-96–Cys-120, Cys-131–Cys-138, Cys-140–Cys-160, Cys-164–Cys-183, and Cys-194–Cys-235. Tyr-108 is modified (iodotyrosine). N-linked (GlcNAc...) asparagine glycosylation occurs at Asn-110. An Iodotyrosine; alternate modification is found at Tyr-149. Position 149 is a diiodotyrosine; alternate (Tyr-149). Residue Asn-198 is glycosylated (N-linked (GlcNAc...) asparagine). 2 positions are modified to iodotyrosine: Tyr-234 and Tyr-258. The region spanning 298 to 358 (PTKCEVERFA…TRRPSEPLSC (61 aa)) is the Thyroglobulin type-1 4 domain. 9 disulfide bridges follow: Cys-301/Cys-319, Cys-330/Cys-336, Cys-338/Cys-358, Cys-364/Cys-621, Cys-408/Cys-609, Cys-632/Cys-637, Cys-639/Cys-659, Cys-663/Cys-688, and Cys-699/Cys-704. 3 N-linked (GlcNAc...) asparagine glycosylation sites follow: Asn-485, Asn-497, and Asn-546. Thyroglobulin type-1 domains follow at residues 606 to 659 (SQGC…RPRC), 660 to 727 (PTAC…PKQC), and 728 to 923 (PTPC…VPAC). Residue Tyr-705 is modified to Iodotyrosine; alternate. The residue at position 705 (Tyr-705) is a Thyroxine; alternate. Position 705 is a triiodothyronine; alternate (Tyr-705). Residue Tyr-705 is modified to Diiodotyrosine; alternate. Intrachain disulfides connect Cys-706-Cys-727, Cys-731-Cys-764, Cys-775-Cys-900, Cys-902-Cys-923, Cys-927-Cys-1033, Cys-1044-Cys-1051, Cys-1053-Cys-1079, Cys-1128-Cys-1147, Cys-1151-Cys-1171, Cys-1183-Cys-1190, Cys-1192-Cys-1212, Cys-1237-Cys-1287, and Cys-1262-Cys-1278. A glycan (N-linked (GlcNAc...) asparagine) is linked at Asn-749. At Tyr-786 the chain carries Iodotyrosine. Asn-855 carries N-linked (GlcNAc...) asparagine glycosylation. The residue at position 868 (Tyr-868) is an Iodotyrosine; alternate. Position 868 is a diiodotyrosine; alternate (Tyr-868). The residue at position 885 (Tyr-885) is a Diiodotyrosine. N-linked (GlcNAc...) asparagine glycosylation occurs at Asn-949. Tyr-994 bears the Iodotyrosine; alternate mark. Diiodotyrosine; alternate is present on Tyr-994. Thyroglobulin type-1 domains are found at residues 1021–1079 (SGPL…PTPC), 1088–1147 (LSAW…SAPC), and 1148–1212 (PGLC…QPAC). The N-linked (GlcNAc...) asparagine glycan is linked to Asn-1142. Tyr-1241 bears the Iodotyrosine mark. A Thyroxine modification is found at Tyr-1241. 2 N-linked (GlcNAc...) asparagine glycosylation sites follow: Asn-1296 and Asn-1384. 13 cysteine pairs are disulfide-bonded: Cys-1372-Cys-1392, Cys-1395-Cys-1406, Cys-1409-Cys-1423, Cys-1426-Cys-1443, Cys-1447-Cys-1456, Cys-1476-Cys-1498, Cys-1535-Cys-1559, Cys-1539-Cys-1545, Cys-1571-Cys-1594, Cys-1656-Cys-1681, Cys-1660-Cys-1666, Cys-1665-Cys-1766, and Cys-1692-Cys-1709. 3 Type II repeats span residues 1389-1402 (PLGCVRCPEGSYFQ), 1403-1419 (EEQCIPCPAGFYQEQTG), and 1420-1436 (SLACAPCPAGTTTTSVG). Tyr-1400 is subject to Iodotyrosine; alternate. A Diiodotyrosine; alternate modification is found at Tyr-1400. The region spanning 1444–1498 (VTACQRDEAGLQCDQDGQYRASQRDRASGKAFCVDSEGRRLPWSETQAPLVDAQC) is the Thyroglobulin type-1 11 domain. Residues 1535 to 1655 (CLADCARDEA…GASLTEAHLF (121 aa)) form a Type IIIA repeat. A Type IIIB repeat occupies 1656 to 1823 (CLLACDRDSC…LFSLQQAHLW (168 aa)). Residue Asn-1800 is glycosylated (N-linked (GlcNAc...) asparagine). Cystine bridges form between Cys-1824–Cys-1850, Cys-1828–Cys-1835, Cys-1859–Cys-1870, Cys-1927–Cys-1955, Cys-1931–Cys-1937, Cys-1936–Cys-2007, Cys-1966–Cys-1979, Cys-2061–Cys-2085, Cys-2065–Cys-2071, and Cys-2094–Cys-2103. The Type IIIA repeat unit spans residues 1824–1926 (CLSRCVQEPS…DKAISSGFFE (103 aa)). The Type IIIB repeat unit spans residues 1927 to 2060 (CERLCDVDPC…VGDFSAARER (134 aa)). The N-linked (GlcNAc...) asparagine glycan is linked to Asn-1944. One copy of the Type IIIA repeat lies at 2061–2118 (CLLECSRHQACLVTTLQTRPGAVRCMFYADTQSCTHSLQAQNCQLLLREEATHIYRKP). Tyr-2115 is subject to Iodotyrosine. The interval 2119 to 2692 (DIPLPGLGSS…PELASKSYSK (574 aa)) is cholinesterase-like (ChEL). Asn-2181 and Asn-2226 each carry an N-linked (GlcNAc...) asparagine glycan. Tyr-2467 carries the thyroxine modification. Tyr-2500 carries the iodotyrosine; alternate modification. Tyr-2500 is modified (thyroxine; alternate). Tyr-2500 carries the triiodothyronine; alternate modification. Residue Tyr-2500 is modified to Diiodotyrosine; alternate. 2 positions are modified to iodotyrosine: Tyr-2514 and Tyr-2544. Residues Cys-2518 and Cys-2642 are joined by a disulfide bond. At Tyr-2624 the chain carries Diiodotyrosine. A compositionally biased stretch (acidic residues) spans 2658-2671 (EAEDGPLAESEEED). Residues 2658–2692 (EAEDGPLAESEEEDRPGLTEDLLGLPELASKSYSK) form a disordered region. At Tyr-2690 the chain carries Iodotyrosine; alternate. Thyroxine; alternate is present on Tyr-2690. Position 2690 is a triiodothyronine; alternate (Tyr-2690). Tyr-2690 carries the post-translational modification Diiodotyrosine; alternate.

This sequence belongs to the type-B carboxylesterase/lipase family. Monomer. Homodimer (via ChEL region); occurs in the endoplasmic reticulum and is required for export to the Golgi apparatus. Homooligomer; disulfide-linked; stored in this form in the thyroid follicle lumen. In terms of processing, iodinated on tyrosine residues by TPO. There are 4 pairs of iodinated tyrosines used for coupling: acceptor Tyr-24 is coupled to donor Tyr-149 or Tyr-234, acceptor Tyr-2500 is coupled to donor Tyr-2467, acceptor Tyr-2690 in monomer 1 is coupled to donor Tyr-2690 in monomer 2 and acceptor Tyr-1241 in monomer 1 is coupled to donor Tyr-108 in monomer 2. Post-translationally, sulfated tyrosines are desulfated during iodination. Undergoes sequential proteolysis by cathepsins to release thyroxine (T4) and triiodothyronine (T3) hormones. In the thyroid follicle lumen, cross-linked TG (storage form) is solubilized by limited proteolysis mediated by cathepsins CTSB and/or CTSL. Partially cleaved TG is further processed by CTSK/cathepsin K and/or CTSL resulting in the release of T4. Following endocytosis, further processing occurs leading to the release of T3 and more T4 hormones. Expressed in thyroid epithelial cells.

It localises to the secreted. Its function is as follows. Acts as a substrate for the production of iodinated thyroid hormones thyroxine (T4) and triiodothyronine (T3). The synthesis of T3 and T4 involves iodination of selected tyrosine residues of TG/thyroglobulin followed by their oxidative coupling. Following TG re-internalization and lysosomal-mediated proteolysis, T3 and T4 are released from the polypeptide backbone leading to their secretion into the bloodstream. One dimer produces 7 thyroid hormone molecules. The chain is Thyroglobulin from Sus scrofa (Pig).